Consider the following 236-residue polypeptide: MVVINKQLMVSGILPAWLKNEYDLEDKIISTVGAGRIGYRVLERLVAFNPKKLLYYDYQELPAEAINRLNEASKLFNGRGDIVQRVEKLEDMVAQSDVVTINCPLHKDSRGLFNKKLISHMKDGAYLVNTARGAICVAEDVAEAVKSGKLAGYGGDVWDKQPAPKDHPWRTMDNKDHVGNAMTVHISGTSLHAQKRYAQGVKNILNSYFSKKFDYRPQDIIVQNGSYATRAYGQKK.

NAD(+)-binding positions include 36 to 37, D57, 104 to 108, T130, D156, and 185 to 188; these read RI, PLHKD, and HISG.

It belongs to the D-isomer specific 2-hydroxyacid dehydrogenase family. FDH subfamily.

The sequence is that of Truncated formate dehydrogenase 2 from Saccharomyces cerevisiae (strain ATCC 204508 / S288c) (Baker's yeast).